A 229-amino-acid chain; its full sequence is Chromophore lyase CpcT/CpeT 1 (229 aa).

It belongs to the CpcT/CpeT biliprotein lyase family.

Functionally, covalently attaches a chromophore to Cys residue(s) of phycobiliproteins. This Gloeobacter violaceus (strain ATCC 29082 / PCC 7421) protein is Chromophore lyase CpcT/CpeT 1.